Reading from the N-terminus, the 471-residue chain is UDP-N-acetylmuramate--L-alanine ligase (471 aa).

114–120 (GTHGKTT) contributes to the ATP binding site.

The protein belongs to the MurCDEF family.

It is found in the cytoplasm. It carries out the reaction UDP-N-acetyl-alpha-D-muramate + L-alanine + ATP = UDP-N-acetyl-alpha-D-muramoyl-L-alanine + ADP + phosphate + H(+). It functions in the pathway cell wall biogenesis; peptidoglycan biosynthesis. Functionally, cell wall formation. This chain is UDP-N-acetylmuramate--L-alanine ligase, found in Rhizobium meliloti (strain 1021) (Ensifer meliloti).